The chain runs to 1057 residues: Self-sufficient cytochrome P450 monooxygenase CYP505E3 (1057 aa).

Cysteine 403 lines the heme pocket. Positions 465–488 (PSAAPFSSHARETTNASLPASPGT) are disordered. A Flavodoxin-like domain is found at 494–634 (MYVLYGSNTG…AFEAWETKLW (141 aa)). Residues 500 to 504 (SNTGT) and 578 to 610 (VFGCGHHDWFRTYQRIPKLIDQTLEDRGAQRLV) each bind FMN. One can recognise an FAD-binding FR-type domain in the interval 671–900 (HDAALGTVIE…RASNAAFHLP (230 aa)).

This sequence in the N-terminal section; belongs to the cytochrome P450 family. Requires FAD as cofactor. It depends on FMN as a cofactor. Heme serves as cofactor.

It catalyses the reaction 2 oxidized [cytochrome P450] + NADPH = 2 reduced [cytochrome P450] + NADP(+) + H(+). The catalysed reaction is an organic molecule + reduced [NADPH--hemoprotein reductase] + O2 = an alcohol + oxidized [NADPH--hemoprotein reductase] + H2O + H(+). The enzyme catalyses dodecan-1-ol + reduced [NADPH--hemoprotein reductase] + O2 = 1,5-dodecanediol + oxidized [NADPH--hemoprotein reductase] + H2O + H(+). It carries out the reaction dodecan-1-ol + reduced [NADPH--hemoprotein reductase] + O2 = 1,6-dodecanediol + oxidized [NADPH--hemoprotein reductase] + H2O + H(+). Its function is as follows. Self-sufficient cytochrome P450 monooxygenase that catalyzes the regioselective in-chain hydroxylation of fatty alcohols (C9-15) as well as fatty acids (C9-15) at the omega-1 to omega-7 or omega-1 to omega-6 positions, respectively. Is also able to convert naphthalene to 1-naphthol and 1-naphthol further to 1,3-dihydroxynaphthalene. The chain is Self-sufficient cytochrome P450 monooxygenase CYP505E3 from Phanerodontia chrysosporium (White-rot fungus).